We begin with the raw amino-acid sequence, 405 residues long: Arrestin red cell isoform 2 (405 aa).

It belongs to the arrestin family.

It localises to the cytoplasm. In Oncorhynchus mykiss (Rainbow trout), this protein is Arrestin red cell isoform 2.